The sequence spans 424 residues: C4-dicarboxylate transport protein (424 aa).

Helical transmembrane passes span 4-24 (SLFK…VLLG), 44-64 (LIKM…IAGM), 76-96 (VALI…LVVV), 142-162 (IGAF…LFGF), 184-206 (VFFG…AMAF), 222-242 (LIVC…GLIA), 326-346 (IWHQ…AAGV), and 352-372 (IVLA…LALI).

This sequence belongs to the dicarboxylate/amino acid:cation symporter (DAACS) (TC 2.A.23) family.

The protein resides in the cell inner membrane. Its function is as follows. Responsible for the transport of dicarboxylates such as succinate, fumarate, and malate from the periplasm across the membrane. This is C4-dicarboxylate transport protein from Erwinia tasmaniensis (strain DSM 17950 / CFBP 7177 / CIP 109463 / NCPPB 4357 / Et1/99).